Here is a 328-residue protein sequence, read N- to C-terminus: Delta(3,5)-Delta(2,4)-dienoyl-CoA isomerase, mitochondrial (328 aa).

A mitochondrion-targeting transit peptide spans 1–26; the sequence is MAAGIVASRRLRDLLTRRLTASNYPG. Substrate is bound by residues 116–120 and G174; that span reads AGVDL. The residue at position 231 (K231) is an N6-succinyllysine. S268 bears the Phosphoserine mark. Residues 326 to 328 carry the Microbody targeting signal motif; it reads SKL. The residue at position 327 (K327) is an N6-acetyllysine.

This sequence belongs to the enoyl-CoA hydratase/isomerase family. Homohexamer.

It localises to the mitochondrion. It is found in the peroxisome. The catalysed reaction is (3E,5Z)-octadienoyl-CoA = (2E,4E)-octadienoyl-CoA. The enzyme catalyses (3E,5Z,8Z,11Z,14Z)-eicosapentaenoyl-CoA = (2E,4E,8Z,11Z,14Z)-eicosapentaenoyl-CoA. It functions in the pathway lipid metabolism; fatty acid beta-oxidation. Functionally, isomerization of 3-trans,5-cis-dienoyl-CoA to 2-trans,4-trans-dienoyl-CoA. The chain is Delta(3,5)-Delta(2,4)-dienoyl-CoA isomerase, mitochondrial (ECH1) from Pongo abelii (Sumatran orangutan).